The chain runs to 330 residues: Mas-related G-protein coupled receptor member X2 (330 aa).

At 1–33 the chain is on the extracellular side; sequence MDPTTPAWGTESTTMNGNDQALPLLCGKETLIL. Residues 34 to 54 traverse the membrane as a helical segment; it reads VLLILFIALVGLVGNAFVLWL. The Cytoplasmic portion of the chain corresponds to 55–63; sequence LGFRMRRNA. A helical transmembrane segment spans residues 64–84; that stretch reads FSVYVLSLAGADFLFLCFPMI. Over 85 to 96 the chain is Extracellular; sequence NCLEYLINFFHS. A helical membrane pass occupies residues 97–117; the sequence is ISINFPSFFTTVMTCAYLAGL. The Cytoplasmic portion of the chain corresponds to 118–144; the sequence is SMLSAISTERCLSVLWPIWYRCRRPRH. Residues 145–165 traverse the membrane as a helical segment; sequence LSAVLCVLLWALSLLLSILEG. The Extracellular segment spans residues 166–184; sequence KFCGLLFSDGDSGWCQTFD. A helical transmembrane segment spans residues 185-205; it reads FITAAWLMFLFVVLCGSSLAL. At 206–228 the chain is on the cytoplasmic side; that stretch reads LVRILCGSQGLPLTRLYLTILLT. Residues 229–249 traverse the membrane as a helical segment; sequence VLIFLLCGLPFGIQWFLILWI. Residues 250-264 are Extracellular-facing; the sequence is WKNSDVLFCHIHPVS. A helical transmembrane segment spans residues 265-285; the sequence is VVLSSFNSSANPIIYFFVGSF. Topologically, residues 286 to 330 are cytoplasmic; sequence RKQWRLRQPVLKLALQRALQDTAEVDHSEGCFSQGTLEMSGSSLV.

The protein belongs to the G-protein coupled receptor 1 family. Mas subfamily.

It is found in the cell membrane. Functionally, mast cell-specific receptor for basic secretagogues, i.e. cationic amphiphilic drugs, as well as endo- or exogenous peptides, consisting of a basic head group and a hydrophobic core. Recognizes and binds small molecules containing a cyclized tetrahydroisoquinoline (THIQ), such as non-steroidal neuromuscular blocking drugs (NMBDs), including tubocurarine and atracurium. In response to these compounds, mediates pseudo-allergic reactions characterized by histamine release, inflammation and airway contraction. The chain is Mas-related G-protein coupled receptor member X2 (MRGPRX2) from Rhinopithecus bieti (Black snub-nosed monkey).